A 153-amino-acid polypeptide reads, in one-letter code: Probable disulfide formation protein (153 aa).

A helical transmembrane segment spans residues Asp4–Tyr23. Cys33 and Cys36 are joined by a disulfide. The next 2 helical transmembrane spans lie at Ala38–Gly57 and Tyr64–Leu81. The cysteines at positions 93 and 101 are disulfide-linked. The helical transmembrane segment at Arg117–Pro139 threads the bilayer.

It belongs to the DsbB family. BdbC subfamily.

The protein resides in the cell membrane. Its function is as follows. Required for disulfide bond formation in some proteins. The sequence is that of Probable disulfide formation protein from Deinococcus radiodurans (strain ATCC 13939 / DSM 20539 / JCM 16871 / CCUG 27074 / LMG 4051 / NBRC 15346 / NCIMB 9279 / VKM B-1422 / R1).